A 725-amino-acid polypeptide reads, in one-letter code: Dynein axonemal assembly factor 1 (725 aa).

Residues 1–91 (MHPEPSEPAT…EDRGPRMTKS (91 aa)) form a disordered region. Residues 38–48 (GCKEEINDPKE) show a composition bias toward basic and acidic residues. Residues 53–67 (SSDTSYHSQQKQSGD) show a composition bias toward polar residues. The span at 76–86 (HPREDREDRGP) shows a compositional bias: basic and acidic residues. LRR repeat units lie at residues 107–129 (ALND…EEYT), 130–151 (GLRC…EAQT), 152–173 (ELRC…EPLQ), 174–195 (KLDA…SCLP), 196–217 (VLNT…QHLQ), and 221–242 (RLCV…SILE). Positions 256 to 294 (PVIRQIPNYRRTVTVRLKHLTYLDDRPVFPKDRACAEAW) constitute an LRRCT domain. Residues 330 to 345 (RAEERKRQRESQERGE) show a composition bias toward basic and acidic residues. Positions 330-513 (RAEERKRQRE…LGAAREEPTP (184 aa)) are disordered. S358 bears the Phosphoserine mark. Composition is skewed to basic and acidic residues over residues 360–408 (EGKE…REDG) and 481–491 (VKGEDGDREPE). T559 is modified (phosphothreonine). Residues S562 and S583 each carry the phosphoserine modification. Over residues 632–642 (DLEIRKQDTKS) the composition is skewed to basic and acidic residues. The segment at 632–703 (DLEIRKQDTK…AATPPETCVG (72 aa)) is disordered.

The protein belongs to the DNAAF1 family. In terms of tissue distribution, mainly expressed in trachea and testis.

Its subcellular location is the cell projection. The protein resides in the cilium. It is found in the cytoplasm. The protein localises to the cytoskeleton. It localises to the spindle pole. In terms of biological role, cilium-specific protein required for the stability of the ciliary architecture. Plays a role in cytoplasmic preassembly of dynein arms. Involved in regulation of microtubule-based cilia and actin-based brush border microvilli. In Homo sapiens (Human), this protein is Dynein axonemal assembly factor 1 (DNAAF1).